We begin with the raw amino-acid sequence, 203 residues long: Putative 3-methyladenine DNA glycosylase (203 aa).

It belongs to the DNA glycosylase MPG family.

This Mycobacterium tuberculosis (strain ATCC 25177 / H37Ra) protein is Putative 3-methyladenine DNA glycosylase.